A 262-amino-acid chain; its full sequence is Spindlin-W (262 aa).

Positions 1–49 (MKTPFGKSPAQRSRADAGHTRVSASMMKKRTSHKKHRNNVGPSKPISQP) are disordered. Residues 27-38 (MKKRTSHKKHRN) show a composition bias toward basic residues.

The protein belongs to the SPIN/STSY family. In terms of tissue distribution, expressed predominantly in ovarian granulosa and thecal cell.

It localises to the nucleus. In terms of biological role, may play a role in mitosis. This is Spindlin-W (SPINW) from Gallus gallus (Chicken).